Reading from the N-terminus, the 315-residue chain is MLEIEKPIIECIEASEDGTYGKYVVEPLERGYGITLGNALRRILLSSLPGVATSSVKIDGVLHEFSTVQGVKEDVTELILNIKSLALRMNGEGPKVIYIDAKGPGEVTGADIKTDGDVEVVNKDLHIATLDDNGRLYMELTVNRGRGYVTQNKNKSDELPISSIAIDSIYTPVKKVNFTVDNTRVGQITDYDKLTLEIWTNGTIKIDEAISLSAKILIEHFKLFMSLTNNTNDVEIMIEKEEDKKEKVLEMTVEELDLSVRSYNCLKRAGINTVQELATKSMDDMMKVRNLGKKSLEEVERKLKELGLCLKLNDE.

An alpha N-terminal domain (alpha-NTD) region spans residues 1–228 (MLEIEKPIIE…EHFKLFMSLT (228 aa)). An alpha C-terminal domain (alpha-CTD) region spans residues 245–315 (KEKVLEMTVE…LGLCLKLNDE (71 aa)).

It belongs to the RNA polymerase alpha chain family. In terms of assembly, homodimer. The RNAP catalytic core consists of 2 alpha, 1 beta, 1 beta' and 1 omega subunit. When a sigma factor is associated with the core the holoenzyme is formed, which can initiate transcription.

It carries out the reaction RNA(n) + a ribonucleoside 5'-triphosphate = RNA(n+1) + diphosphate. Its function is as follows. DNA-dependent RNA polymerase catalyzes the transcription of DNA into RNA using the four ribonucleoside triphosphates as substrates. This chain is DNA-directed RNA polymerase subunit alpha, found in Clostridium botulinum (strain Alaska E43 / Type E3).